The sequence spans 349 residues: tRNA pseudouridine synthase D (349 aa).

Position 27 (Phe-27) interacts with substrate. Asp-80 functions as the Nucleophile in the catalytic mechanism. A substrate-binding site is contributed by Asn-129. Residues 155-303 (GVPNYFGAQR…VEAARRAMLL (149 aa)) enclose the TRUD domain. Phe-329 is a binding site for substrate.

This sequence belongs to the pseudouridine synthase TruD family.

It carries out the reaction uridine(13) in tRNA = pseudouridine(13) in tRNA. In terms of biological role, responsible for synthesis of pseudouridine from uracil-13 in transfer RNAs. The polypeptide is tRNA pseudouridine synthase D (Escherichia coli O6:K15:H31 (strain 536 / UPEC)).